The sequence spans 213 residues: Large ribosomal subunit protein uL3 (213 aa).

The tract at residues 131–168 is disordered; sequence GPMSHGSKNHRLPGSTGAGTTPGRVYPGKRMAGRSGND.

Belongs to the universal ribosomal protein uL3 family. Part of the 50S ribosomal subunit. Forms a cluster with proteins L14 and L19.

One of the primary rRNA binding proteins, it binds directly near the 3'-end of the 23S rRNA, where it nucleates assembly of the 50S subunit. In Synechococcus elongatus (strain ATCC 33912 / PCC 7942 / FACHB-805) (Anacystis nidulans R2), this protein is Large ribosomal subunit protein uL3.